Consider the following 499-residue polypeptide: uncharacterized protein (499 aa).

Transmembrane regions (helical) follow at residues 51-71 (LLFR…LVAF), 98-118 (IIAS…TLLM), 127-147 (LAFI…CHNF), 155-175 (LVLG…LTMI), 187-207 (YLFA…YAVL), 220-240 (WLFI…YFII), 301-321 (CLYG…YTSL), 325-345 (YMTI…SFLS), 352-372 (GIIL…LLAC), 378-398 (VLYF…GLNV), 412-432 (ATAI…AGQI), and 444-464 (LTSL…IFFL).

The protein belongs to the major facilitator superfamily. Allantoate permease family.

Its subcellular location is the golgi apparatus. The protein resides in the membrane. This is an uncharacterized protein from Schizosaccharomyces pombe (strain 972 / ATCC 24843) (Fission yeast).